Consider the following 58-residue polypeptide: Small ribosomal subunit protein bS21 (58 aa).

It belongs to the bacterial ribosomal protein bS21 family.

This Staphylococcus aureus (strain bovine RF122 / ET3-1) protein is Small ribosomal subunit protein bS21.